Reading from the N-terminus, the 182-residue chain is Alpha-S2-casein (182 aa).

An N-terminal signal peptide occupies residues 1–15 (MKFFIFTCLLAVALA). Phosphoserine occurs at positions 22, 23, and 24.

The protein belongs to the alpha-casein family. In terms of tissue distribution, mammary gland specific. Secreted in milk.

The protein localises to the secreted. Its function is as follows. Important role in the capacity of milk to transport calcium phosphate. In Oryctolagus cuniculus (Rabbit), this protein is Alpha-S2-casein (CSN1S2).